The chain runs to 115 residues: uncharacterized protein (115 aa).

The N-terminal stretch at 1 to 29 (MKKAMAILAVLAAAAVICGLLFFHNDVTD) is a signal peptide.

This is an uncharacterized protein from Bacillus subtilis (strain 168).